The following is a 296-amino-acid chain: Formamidopyrimidine-DNA glycosylase (296 aa).

P2 serves as the catalytic Schiff-base intermediate with DNA. E3 functions as the Proton donor in the catalytic mechanism. The active-site Proton donor; for beta-elimination activity is K61. H104, R128, and K174 together coordinate DNA. The segment at 260 to 294 (HAYGQQGQACDRCGSNIIREKFANRSSHFCPRCQL) adopts an FPG-type zinc-finger fold. R284 serves as the catalytic Proton donor; for delta-elimination activity.

It belongs to the FPG family. In terms of assembly, monomer. The cofactor is Zn(2+).

The enzyme catalyses Hydrolysis of DNA containing ring-opened 7-methylguanine residues, releasing 2,6-diamino-4-hydroxy-5-(N-methyl)formamidopyrimidine.. It catalyses the reaction 2'-deoxyribonucleotide-(2'-deoxyribose 5'-phosphate)-2'-deoxyribonucleotide-DNA = a 3'-end 2'-deoxyribonucleotide-(2,3-dehydro-2,3-deoxyribose 5'-phosphate)-DNA + a 5'-end 5'-phospho-2'-deoxyribonucleoside-DNA + H(+). Involved in base excision repair of DNA damaged by oxidation or by mutagenic agents. Acts as a DNA glycosylase that recognizes and removes damaged bases. Has a preference for oxidized purines, such as 7,8-dihydro-8-oxoguanine (8-oxoG). Has AP (apurinic/apyrimidinic) lyase activity and introduces nicks in the DNA strand. Cleaves the DNA backbone by beta-delta elimination to generate a single-strand break at the site of the removed base with both 3'- and 5'-phosphates. This is Formamidopyrimidine-DNA glycosylase from Corynebacterium diphtheriae (strain ATCC 700971 / NCTC 13129 / Biotype gravis).